The following is a 218-amino-acid chain: Small ribosomal subunit protein uS3 (218 aa).

Residues isoleucine 39–lysine 107 form the KH type-2 domain.

The protein belongs to the universal ribosomal protein uS3 family. Part of the 30S ribosomal subunit. Forms a tight complex with proteins S10 and S14.

Its function is as follows. Binds the lower part of the 30S subunit head. Binds mRNA in the 70S ribosome, positioning it for translation. The sequence is that of Small ribosomal subunit protein uS3 from Desulforudis audaxviator (strain MP104C).